Reading from the N-terminus, the 326-residue chain is tRNA-dihydrouridine(16) synthase (326 aa).

FMN is bound by residues 8–10 (PME) and Q69. The active-site Proton donor is the C99. FMN contacts are provided by residues K140, 200–202 (NGE), and 224–225 (GR).

It belongs to the Dus family. DusC subfamily. It depends on FMN as a cofactor.

It catalyses the reaction 5,6-dihydrouridine(16) in tRNA + NADP(+) = uridine(16) in tRNA + NADPH + H(+). The enzyme catalyses 5,6-dihydrouridine(16) in tRNA + NAD(+) = uridine(16) in tRNA + NADH + H(+). Functionally, catalyzes the synthesis of 5,6-dihydrouridine (D), a modified base found in the D-loop of most tRNAs, via the reduction of the C5-C6 double bond in target uridines. Specifically modifies U16 in tRNAs. The chain is tRNA-dihydrouridine(16) synthase from Ralstonia nicotianae (strain ATCC BAA-1114 / GMI1000) (Ralstonia solanacearum).